The sequence spans 137 residues: Large ribosomal subunit protein uL16 (137 aa).

The protein belongs to the universal ribosomal protein uL16 family. In terms of assembly, part of the 50S ribosomal subunit.

Its function is as follows. Binds 23S rRNA and is also seen to make contacts with the A and possibly P site tRNAs. This is Large ribosomal subunit protein uL16 from Nitratidesulfovibrio vulgaris (strain DSM 19637 / Miyazaki F) (Desulfovibrio vulgaris).